A 115-amino-acid polypeptide reads, in one-letter code: Large ribosomal subunit protein bL19 (115 aa).

The protein belongs to the bacterial ribosomal protein bL19 family.

This protein is located at the 30S-50S ribosomal subunit interface and may play a role in the structure and function of the aminoacyl-tRNA binding site. This is Large ribosomal subunit protein bL19 from Bacillus pumilus (strain SAFR-032).